We begin with the raw amino-acid sequence, 287 residues long: 4-hydroxybenzoate octaprenyltransferase (287 aa).

5 helical membrane passes run 20-38 (IGTLLLMWPCLMALWFAAG), 95-115 (IVFLVMALFAFCLVLLLNPLV), 211-231 (IIAAFQFAALACFIIAGLIAE), 235-255 (IYGGGILAFIGFALYQQKLIF), and 266-286 (FLNNNWAGMALFIALGLDYLV).

This sequence belongs to the UbiA prenyltransferase family. Requires Mg(2+) as cofactor.

The protein resides in the cell inner membrane. The catalysed reaction is all-trans-octaprenyl diphosphate + 4-hydroxybenzoate = 4-hydroxy-3-(all-trans-octaprenyl)benzoate + diphosphate. It functions in the pathway cofactor biosynthesis; ubiquinone biosynthesis. Its function is as follows. Catalyzes the prenylation of para-hydroxybenzoate (PHB) with an all-trans polyprenyl group. Mediates the second step in the final reaction sequence of ubiquinone-8 (UQ-8) biosynthesis, which is the condensation of the polyisoprenoid side chain with PHB, generating the first membrane-bound Q intermediate 3-octaprenyl-4-hydroxybenzoate. The sequence is that of 4-hydroxybenzoate octaprenyltransferase from Shewanella piezotolerans (strain WP3 / JCM 13877).